The primary structure comprises 310 residues: MTVDELKTKKIGVLMGGLSAEREVSLKSGAAVHQALLARGYDAVAIDVDRDIAQVLVREWVDVAFIALHGRYGEDGAIQGLLEIMGIPYTGSGVLASALAMNKIFAKQAFQAARLTVAPYKVFCRGDKAALAELEFSLPVVVKPSQEGSSVGVSIVKKESEFAAAMKEAFRYDREILVEQFIKGSEVQVGILEDKALGAIEIVPKNEFYDFDAKYSPGMAEHILPARLPAELYRKVLRAGEDAHRALGCSGYSRVDFLVTEEGACYILEVNTLPGMTDLSLLPEIARGSGIGFEDLVERILAAAALKISQ.

The 196-residue stretch at 107-302 folds into the ATP-grasp domain; the sequence is KQAFQAARLT…FEDLVERILA (196 aa). 135–188 contributes to the ATP binding site; that stretch reads EFSLPVVVKPSQEGSSVGVSIVKKESEFAAAMKEAFRYDREILVEQFIKGSEVQ. Mg(2+)-binding residues include D256, E269, and N271.

This sequence belongs to the D-alanine--D-alanine ligase family. It depends on Mg(2+) as a cofactor. Mn(2+) is required as a cofactor.

It is found in the cytoplasm. The catalysed reaction is 2 D-alanine + ATP = D-alanyl-D-alanine + ADP + phosphate + H(+). It functions in the pathway cell wall biogenesis; peptidoglycan biosynthesis. Functionally, cell wall formation. This is D-alanine--D-alanine ligase from Geotalea uraniireducens (strain Rf4) (Geobacter uraniireducens).